The sequence spans 610 residues: Modifier of mdg4 (610 aa).

Residues 1 to 160 (MADDEQFSLC…QQPRASARYK (160 aa)) are self-association. The segment at 1–308 (MADDEQFSLC…EEAEYIDLPM (308 aa)) is interaction with Chi. A BTB domain is found at 32 to 98 (VDVSLAAEGQ…MYCGEVNVKQ (67 aa)). Disordered stretches follow at residues 115 to 156 (GLTD…PRAS), 219 to 259 (VSTN…DSTT), 311 to 339 (PTKSEPDYSEDHGDAAGDAEGTYVEDDTY), and 386 to 432 (ESSF…PKPK). Residues 122-135 (APQPPQESSPPPAA) are compositionally biased toward pro residues. The span at 136–156 (PHVQQQQIPAQRVQRQQPRAS) shows a compositional bias: low complexity. Residues 222–238 (NKRSAQRSSLTPASSSA) show a composition bias toward polar residues. S230 is subject to Phosphoserine. Basic and acidic residues predominate over residues 312–325 (TKSEPDYSEDHGDA). The segment covering 386 to 400 (ESSFVDTSGDQGNTE) has biased composition (polar residues). The segment covering 401 to 410 (AQAATSASAT) has biased composition (low complexity). The span at 422 to 432 (TKVEDQTPKPK) shows a compositional bias: basic and acidic residues. The FLYWCH-type zinc finger occupies 452-512 (YASTTKGGVK…VFPYEGEHVH (61 aa)). The segment at 551–610 (LEEADDKEDEDFEEFEIQEIDEIELDEPEKTPAKEEEVDPNDFREKIKRRLQKALQNKKK) is interaction with su(Hw). Residues 567–577 (IQEIDEIELDE) are compositionally biased toward acidic residues. Positions 567-595 (IQEIDEIELDEPEKTPAKEEEVDPNDFRE) are disordered. A compositionally biased stretch (basic and acidic residues) spans 578–595 (PEKTPAKEEEVDPNDFRE).

Can self-associate. Interacts with Chi. Interacts with Top2. Isoform mod2.2: Component of the gypsy chromatin insulator complex, composed of Cp190, mod(mdg4) and su(Hw). The gypsy chromatin insulator complex interacts with Topors via mod(mdg4) and su(Hw). Isoform mod2.2 interacts with Trl/GAGA and interaction with this protein may bypass the repressive effects of the su(Hw) insulator.

Its subcellular location is the nucleus. It is found in the chromosome. Functionally, component of the gypsy chromatin insulator complex which is required for the function of the gypsy chromatin insulator and other endogenous chromatin insulators. Chromatin insulators are regulatory elements which establish independent domains of transcriptional activity within eukaryotic genomes. Insulators have two defining properties; they can block the communication between an enhancer and a promoter when placed between them and can also buffer transgenes from position effect variegation (PEV). Insulators are proposed to structure the chromatin fiber into independent domains of differing transcriptional potential by promoting the formation of distinct chromatin loops. This chromatin looping may involve the formation of insulator bodies, where homotypic interactions between individual subunits of the insulator complex could promote the clustering of widely spaced insulators at the nuclear periphery. Within the gypsy insulator complex, this protein may control the nature of the repressive effect of su(Hw): in the absence of mod(mdg4) protein, su(Hw) exerts a bidirectional silencing effect, whereas in the presence of mod(mdg4), the silencing effect is unidirectional. Isoform H is specifically required to maintain the pairing of achiasmate homologs in male meiosis I which is mediated by the rDNA repeats on the achiasmate X-Y bivalents. Isoform H also plays a role in apoptotic regulatory pathways. In Drosophila melanogaster (Fruit fly), this protein is Modifier of mdg4.